The following is a 205-amino-acid chain: 3-demethoxyubiquinol 3-hydroxylase (205 aa).

Residues E54, E84, H87, E136, E168, and H171 each coordinate Fe cation.

The protein belongs to the COQ7 family. Fe cation serves as cofactor.

The protein localises to the cell membrane. The enzyme catalyses a 5-methoxy-2-methyl-3-(all-trans-polyprenyl)benzene-1,4-diol + AH2 + O2 = a 3-demethylubiquinol + A + H2O. It functions in the pathway cofactor biosynthesis; ubiquinone biosynthesis. Its function is as follows. Catalyzes the hydroxylation of 2-nonaprenyl-3-methyl-6-methoxy-1,4-benzoquinol during ubiquinone biosynthesis. The sequence is that of 3-demethoxyubiquinol 3-hydroxylase from Paracidovorax citrulli (strain AAC00-1) (Acidovorax citrulli).